The sequence spans 3718 residues: Laminin subunit alpha-5 (3718 aa).

The N-terminal stretch at 1 to 40 is a signal peptide; the sequence is MAKRGGQLCAGSAPGALGPRSPAPRPLLLLLAGLALVGEA. The Laminin N-terminal domain maps to 46–304; it reads DGFSLHPPYF…SIKDISIGGR (259 aa). N-linked (GlcNAc...) asparagine glycosylation is found at asparagine 100, asparagine 148, and asparagine 248. 12 cysteine pairs are disulfide-bonded: cysteine 305/cysteine 314, cysteine 307/cysteine 327, cysteine 329/cysteine 338, cysteine 341/cysteine 361, cysteine 364/cysteine 373, cysteine 366/cysteine 398, cysteine 401/cysteine 410, cysteine 413/cysteine 431, cysteine 434/cysteine 445, cysteine 436/cysteine 452, cysteine 454/cysteine 463, and cysteine 466/cysteine 476. Laminin EGF-like domains are found at residues 305–363, 364–433, and 434–479; these read CVCH…ECQS, CNCH…VCRP, and CDCE…CYPL. N-linked (GlcNAc...) asparagine glycosylation is present at asparagine 383. N-linked (GlcNAc...) asparagine glycosylation is present at asparagine 457. Residue asparagine 485 is glycosylated (N-linked (GlcNAc...) asparagine). 29 cysteine pairs are disulfide-bonded: cysteine 500–cysteine 512, cysteine 502–cysteine 521, cysteine 523–cysteine 532, cysteine 535–cysteine 544, cysteine 547–cysteine 559, cysteine 549–cysteine 566, cysteine 568–cysteine 577, cysteine 580–cysteine 590, cysteine 593–cysteine 605, cysteine 595–cysteine 611, cysteine 613–cysteine 622, cysteine 625–cysteine 635, cysteine 638–cysteine 650, cysteine 640–cysteine 656, cysteine 658–cysteine 667, cysteine 670–cysteine 680, cysteine 683–cysteine 695, cysteine 685–cysteine 702, cysteine 704–cysteine 713, cysteine 716–cysteine 731, cysteine 752–cysteine 761, cysteine 764–cysteine 779, cysteine 782–cysteine 796, cysteine 784–cysteine 802, cysteine 804–cysteine 813, cysteine 816–cysteine 831, cysteine 834–cysteine 846, cysteine 836–cysteine 853, and cysteine 855–cysteine 864. Laminin EGF-like domains follow at residues 500–546, 547–592, 593–637, 638–682, 683–728, 729–781, and 782–833; these read CDCN…SCHP, CQCS…LCQL, CGCS…DCHA, CACD…SCIP, CHCS…YCEA, GSCH…GCTR, and CSCD…GCRS. The 22-residue stretch at 834-855 folds into the Laminin EGF-like 11; truncated domain; that stretch reads CRCDVGGALGQGCEPKTGACRC. The domain IV 1 (domain IV B) stretch occupies residues 856–1442; the sequence is RPNTQGPTCS…SLFYNNGALP (587 aa). Asparagine 905, asparagine 926, and asparagine 964 each carry an N-linked (GlcNAc...) asparagine glycan. The tract at residues 1253–1284 is disordered; the sequence is LTQSQELSPGAPPEGPQPRPPTAVDPNAEPTL. Positions 1262–1275 are enriched in pro residues; sequence GAPPEGPQPRPPTA. N-linked (GlcNAc...) asparagine glycosylation is present at asparagine 1335. Intrachain disulfides connect cysteine 1443–cysteine 1455, cysteine 1445–cysteine 1462, cysteine 1464–cysteine 1473, cysteine 1476–cysteine 1486, cysteine 1489–cysteine 1496, cysteine 1491–cysteine 1503, cysteine 1505–cysteine 1514, cysteine 1517–cysteine 1530, cysteine 1533–cysteine 1548, cysteine 1535–cysteine 1555, cysteine 1557–cysteine 1566, cysteine 1569–cysteine 1579, cysteine 1582–cysteine 1594, cysteine 1584–cysteine 1601, cysteine 1603–cysteine 1612, and cysteine 1615–cysteine 1630. 4 Laminin EGF-like domains span residues 1443–1488, 1489–1532, 1533–1581, and 1582–1632; these read CGCH…NCRP, CDCG…GCEE, CNCS…SCRP, and CDCH…GCTR. N-linked (GlcNAc...) asparagine glycosylation occurs at asparagine 1534. The region spanning 1633–1642 is the Laminin EGF-like 16; first part domain; that stretch reads CFCFGATERC. A Laminin IV type A domain is found at 1646 to 1831; that stretch reads NLARHEFVDM…RGPPASNVEL (186 aa). 2 short sequence motifs (cell attachment site) span residues 1723 to 1725 and 1839 to 1841; these read RGD. The 33-residue stretch at 1832–1864 folds into the Laminin EGF-like 16; second part domain; that stretch reads CMCPANYRGDSCQECAPGYYRDTKGLFLGRCVP. Cystine bridges form between cysteine 1865–cysteine 1874, cysteine 1867–cysteine 1881, cysteine 1884–cysteine 1893, cysteine 1896–cysteine 1912, cysteine 1915–cysteine 1930, cysteine 1917–cysteine 1939, cysteine 1941–cysteine 1950, cysteine 1953–cysteine 1968, cysteine 1971–cysteine 1986, cysteine 1973–cysteine 1993, cysteine 1996–cysteine 2005, cysteine 2008–cysteine 2022, cysteine 2025–cysteine 2035, cysteine 2027–cysteine 2042, cysteine 2044–cysteine 2053, cysteine 2056–cysteine 2069, cysteine 2072–cysteine 2083, cysteine 2074–cysteine 2090, cysteine 2092–cysteine 2101, cysteine 2104–cysteine 2116, cysteine 2119–cysteine 2126, cysteine 2121–cysteine 2133, cysteine 2135–cysteine 2144, and cysteine 2147–cysteine 2166. 6 Laminin EGF-like domains span residues 1865-1914, 1915-1970, 1971-2024, 2025-2071, 2072-2118, and 2119-2168; these read CQCH…PCVS, CPCP…SCQP, CDCS…NCTR, CDCS…GCRP, CACG…GCRR, and CQCP…HCEV. The N-linked (GlcNAc...) asparagine glycan is linked to asparagine 2021. The segment at 2169–2735 is domain II and I; it reads CDHCVVLLLD…AQARSAASKV (567 aa). Asparagine 2198, asparagine 2211, asparagine 2365, asparagine 2395, asparagine 2425, asparagine 2503, and asparagine 2570 each carry an N-linked (GlcNAc...) asparagine glycan. Coiled coils occupy residues 2205 to 2257 and 2330 to 2464; these read ARLH…SQAT and TRDL…ASLD. Coiled-coil stretches lie at residues 2604–2621 and 2639–2705; these read ARKN…AMLA and AEAL…LENR. A glycan (N-linked (GlcNAc...) asparagine) is linked at asparagine 2709. Laminin G-like domains lie at 2736–2933, 2947–3119, 3128–3296, 3337–3511, and 3518–3689; these read KVSM…DKPC, GSYL…SFGC, TMTF…SVGC, AYQF…VTPC, and DGLF…MRGC. Intrachain disulfides connect cysteine 2903–cysteine 2933 and cysteine 3094–cysteine 3119. 4 N-linked (GlcNAc...) asparagine glycosylation sites follow: asparagine 3111, asparagine 3213, asparagine 3261, and asparagine 3291. 2 disulfide bridges follow: cysteine 3265-cysteine 3296 and cysteine 3488-cysteine 3511. N-linked (GlcNAc...) asparagine glycosylation is found at asparagine 3623 and asparagine 3673. Cysteines 3661 and 3689 form a disulfide.

Laminin is a complex glycoprotein, consisting of three different polypeptide chains (alpha, beta, gamma), which are bound to each other by disulfide bonds into a cross-shaped molecule comprising one long and three short arms with globules at each end. Alpha-5 is a subunit of laminin-10 (laminin-511), laminin-11 (laminin-521) and laminin-15 (laminin-523). In adult, high levels in heart, lung, and kidney; lower in brain, muscle and testis; very low in liver, gut and skin.

Its subcellular location is the secreted. It localises to the extracellular space. The protein resides in the extracellular matrix. The protein localises to the basement membrane. Binding to cells via a high affinity receptor, laminin is thought to mediate the attachment, migration and organization of cells into tissues during embryonic development by interacting with other extracellular matrix components. Alpha-5 may be the major laminin alpha chain of adult epithelial and/or endothelial basal laminae. Plays a role in the regulation of skeletogenesis, through a mechanism that involves integrin-mediated signaling and PTK2B/PYK2. In Mus musculus (Mouse), this protein is Laminin subunit alpha-5 (Lama5).